A 315-amino-acid chain; its full sequence is MAQPRIGQRVIVDVPATTANLGPGFDCLGAALDLNNRFAMRRIEGGGERFELIIEGSEGSHLRGGPENLVYRAAQRVWKAAGLEPVALEARVRLAVPPARGLGSSATAIVAGLMGANALVGEPLSKEKLLELAIDIEGHPDNVVPSLLGGLCMTAKAASQRWRVVRCEWTSTVKAVVAIPSIRLSTSEARRAMPKAIPVSDAVVNLGALTLLLQGLRTGNGDLISDGMHDRLHEPYRWRLIKGGDQVKQAAMDAGAWGCAISGAGPSVLALCAEDKGMAVSRAMVRAWEAAGVASRAPVLNVQTTGSHWQPADDE.

Position 97–107 (97–107 (PPARGLGSSAT)) interacts with ATP.

It belongs to the GHMP kinase family. Homoserine kinase subfamily.

It is found in the cytoplasm. The enzyme catalyses L-homoserine + ATP = O-phospho-L-homoserine + ADP + H(+). It participates in amino-acid biosynthesis; L-threonine biosynthesis; L-threonine from L-aspartate: step 4/5. In terms of biological role, catalyzes the ATP-dependent phosphorylation of L-homoserine to L-homoserine phosphate. The sequence is that of Homoserine kinase from Synechococcus sp. (strain CC9902).